A 412-amino-acid chain; its full sequence is Cysteine desulfurase (412 aa).

Lysine 231 carries the post-translational modification N6-(pyridoxal phosphate)lysine. Cysteine 369 functions as the Cysteine persulfide intermediate in the catalytic mechanism.

The protein belongs to the class-V pyridoxal-phosphate-dependent aminotransferase family. Csd subfamily. As to quaternary structure, homodimer. Interacts with SufE and the SufBCD complex composed of SufB, SufC and SufD. The interaction with SufE is required to mediate the direct transfer of the sulfur atom from the S-sulfanylcysteine. Requires pyridoxal 5'-phosphate as cofactor.

The protein localises to the cytoplasm. The catalysed reaction is (sulfur carrier)-H + L-cysteine = (sulfur carrier)-SH + L-alanine. It catalyses the reaction L-selenocysteine + AH2 = hydrogenselenide + L-alanine + A + H(+). It participates in cofactor biosynthesis; iron-sulfur cluster biosynthesis. Its function is as follows. Cysteine desulfurases mobilize the sulfur from L-cysteine to yield L-alanine, an essential step in sulfur metabolism for biosynthesis of a variety of sulfur-containing biomolecules. Component of the suf operon, which is activated and required under specific conditions such as oxidative stress and iron limitation. Acts as a potent selenocysteine lyase in vitro, that mobilizes selenium from L-selenocysteine. Selenocysteine lyase activity is however unsure in vivo. In Dickeya dadantii (strain 3937) (Erwinia chrysanthemi (strain 3937)), this protein is Cysteine desulfurase (sufS).